Reading from the N-terminus, the 81-residue chain is Photosystem I iron-sulfur center (81 aa).

4Fe-4S ferredoxin-type domains lie at 2–31 (AHTVKIYDNCIGCTQCVRACPLDVLEMVPW) and 39–68 (MASAPRTEDCVGCKRCETACPTDFLSIRVY). 8 residues coordinate [4Fe-4S] cluster: Cys11, Cys14, Cys17, Cys21, Cys48, Cys51, Cys54, and Cys58.

In terms of assembly, the eukaryotic PSI reaction center is composed of at least 11 subunits. The cofactor is [4Fe-4S] cluster.

The protein localises to the plastid. It localises to the chloroplast thylakoid membrane. It carries out the reaction reduced [plastocyanin] + hnu + oxidized [2Fe-2S]-[ferredoxin] = oxidized [plastocyanin] + reduced [2Fe-2S]-[ferredoxin]. Apoprotein for the two 4Fe-4S centers FA and FB of photosystem I (PSI); essential for photochemical activity. FB is the terminal electron acceptor of PSI, donating electrons to ferredoxin. The C-terminus interacts with PsaA/B/D and helps assemble the protein into the PSI complex. Required for binding of PsaD and PsaE to PSI. PSI is a plastocyanin/cytochrome c6-ferredoxin oxidoreductase, converting photonic excitation into a charge separation, which transfers an electron from the donor P700 chlorophyll pair to the spectroscopically characterized acceptors A0, A1, FX, FA and FB in turn. This is Photosystem I iron-sulfur center from Cyanidioschyzon merolae (strain NIES-3377 / 10D) (Unicellular red alga).